The chain runs to 435 residues: 3-ketoacyl-CoA thiolase (435 aa).

The active-site Acyl-thioester intermediate is the Cys98. Active-site proton acceptor residues include His391 and Cys421.

The protein belongs to the thiolase-like superfamily. Thiolase family. Heterotetramer of two alpha chains (FadJ) and two beta chains (FadI).

The protein resides in the cytoplasm. The catalysed reaction is an acyl-CoA + acetyl-CoA = a 3-oxoacyl-CoA + CoA. It participates in lipid metabolism; fatty acid beta-oxidation. In terms of biological role, catalyzes the final step of fatty acid oxidation in which acetyl-CoA is released and the CoA ester of a fatty acid two carbons shorter is formed. This is 3-ketoacyl-CoA thiolase from Vibrio vulnificus (strain CMCP6).